The primary structure comprises 285 residues: MSFVAYEELIKEGDTAILSLGHGAMVAVRVQRGAQTQTRHGVLRHSVDLIGRPFGSKVTCGRGGWVYVLHPTPELWTLNLPHRTQILYSTDIALLTMMLELRPGSVVCESGTGSGSVSHAIIRTIAPTGHLHTVEFHQQRAERAREEFQEHRVGRWVTVLNQDVCRSGFGVSHVADAVFLDIPSPWEAVGHAWDALKVEGGRFCSFSPCIEQVQRTCQALAACGFSELSTLEVLPQVYNVRTVSLPVPDLGARPGPDAAPFRSGTPMKETVGHTGYLTFATKTPG.

Ser-2 carries the post-translational modification N-acetylserine. Substrate stretches follow at residues 20-22 (LGH), 35-42 (QTQTRHGV), 64-65 (GW), 85-89 (QILYS), and 110-117 (SGTGSGSV). Residues Leu-87, 114–116 (SGS), Glu-135, Arg-140, 163–164 (DV), and Asp-181 contribute to the S-adenosyl-L-methionine site. Substrate stretches follow at residues 180–183 (LDIP) and 205–212 (SFSPCIEQ). Thr-274 contributes to the substrate binding site.

It belongs to the class I-like SAM-binding methyltransferase superfamily. TRM61 family. In terms of assembly, heterotetramer; composed of two copies of TRMT6 and two copies of TRMT61A.

It is found in the nucleus. The enzyme catalyses adenosine(58) in tRNA + S-adenosyl-L-methionine = N(1)-methyladenosine(58) in tRNA + S-adenosyl-L-homocysteine + H(+). The catalysed reaction is an adenosine in mRNA + S-adenosyl-L-methionine = an N(1)-methyladenosine in mRNA + S-adenosyl-L-homocysteine + H(+). Functionally, catalytic subunit of tRNA (adenine-N(1)-)-methyltransferase, which catalyzes the formation of N(1)-methyladenine at position 58 (m1A58) in initiator methionyl-tRNA. Catalytic subunit of mRNA N(1)-methyltransferase complex, which mediates methylation of adenosine residues at the N(1) position of a small subset of mRNAs: N(1) methylation takes place in tRNA T-loop-like structures of mRNAs and is only present at low stoichiometries. This Bos taurus (Bovine) protein is tRNA (adenine(58)-N(1))-methyltransferase catalytic subunit TRMT61A (TRMT61A).